The sequence spans 456 residues: MIFNNLKNQNKIINFLIIFYFLSFLKQIESQSINITSSSSSWQCRGDLVYRNVSNRIEDEKIGFNFVQYNGTYQSCVIPCPSPFFTINEWNKFLNMSLVMGTISFFSGLFLLVTYSPIVNKTHNRHTIGVMCMSFGVCLAMCSDMWNFGSNFTEKSICPSPGQYLSTSNARCLSSGIFLQFGGVFGFLNWTLLSFDLFMNIKGIITKNYDKYYVSGTFIIAIIFTFVPIVNDQYSMSYIGLGCWLGSAMYQLIFFWILLSICLIVSSVFIILILKEVYIIIKLSKQKTSLKGNIRPLICISITGFAFFYMFFYYISIVVEGDYYERVLNEYTDCLMDPTKDISECKSPRMSVASEFVFLLCLRLLGIGAFIFYGINNKVKKIWLNSYWFNNSFVEKYISRKSADNDKSNSNGSKVLYRTNNTNNNGSFNTGLESSIIEMSTNSNKEESSLNSVDEI.

A signal peptide spans Met-1–Ser-30. The Extracellular portion of the chain corresponds to Gln-31–Lys-92. Residues Asn-34, Asn-52, and Asn-70 are each glycosylated (N-linked (GlcNAc...) asparagine). Residues Phe-93 to Val-113 traverse the membrane as a helical segment. Residues Thr-114–Thr-127 are Cytoplasmic-facing. The helical transmembrane segment at Ile-128–Phe-148 threads the bilayer. Residues Gly-149–Ser-174 lie on the Extracellular side of the membrane. Asn-151 carries an N-linked (GlcNAc...) asparagine glycan. Residues Ser-175–Phe-195 traverse the membrane as a helical segment. Over Asp-196 to Lys-211 the chain is Cytoplasmic. The chain crosses the membrane as a helical span at residues Tyr-212 to Asp-232. The Extracellular segment spans residues Gln-233–Leu-252. Residues Ile-253–Ile-273 traverse the membrane as a helical segment. Over Leu-274–Leu-297 the chain is Cytoplasmic. The helical transmembrane segment at Ile-298–Val-318 threads the bilayer. Residues Val-319–Ser-354 are Extracellular-facing. Residues Glu-355–Ile-375 form a helical membrane-spanning segment. The Cytoplasmic portion of the chain corresponds to Asn-376–Ile-456. Positions Ala-403 to Thr-422 are disordered.

The protein belongs to the G-protein coupled receptor Fz/Smo family.

Its subcellular location is the membrane. This Dictyostelium discoideum (Social amoeba) protein is Frizzled/smoothened-like sans CRD protein F (fscF).